The chain runs to 723 residues: Heme/hemopexin utilization protein C (723 aa).

The signal sequence occupies residues 1-21 (MRFSKLSLAITTTLVTANALA). Residues 36–147 (DPSRFAYTPE…LGGVVAMRTP (112 aa)) form the TBDR plug domain. The TBDR beta-barrel domain maps to 158–723 (KFGVKIRQGY…NAKISAVYSF (566 aa)). Positions 706–723 (SLMEGTGRNAKISAVYSF) match the TonB C-terminal box motif.

This sequence belongs to the TonB-dependent receptor family.

It is found in the cell outer membrane. Required for utilization of free heme at low concentrations. This Haemophilus influenzae (strain ATCC 51907 / DSM 11121 / KW20 / Rd) protein is Heme/hemopexin utilization protein C (hxuC).